Consider the following 537-residue polypeptide: Chaperonin GroEL 1 (537 aa).

ATP is bound by residues 29–32, 86–90, Gly-413, 478–480, and Asp-494; these read TLGP, DGTTT, and NAA.

This sequence belongs to the chaperonin (HSP60) family. As to quaternary structure, forms a cylinder of 14 subunits composed of two heptameric rings stacked back-to-back. Interacts with the co-chaperonin GroES.

The protein localises to the cytoplasm. The enzyme catalyses ATP + H2O + a folded polypeptide = ADP + phosphate + an unfolded polypeptide.. Together with its co-chaperonin GroES, plays an essential role in assisting protein folding. The GroEL-GroES system forms a nano-cage that allows encapsulation of the non-native substrate proteins and provides a physical environment optimized to promote and accelerate protein folding. The chain is Chaperonin GroEL 1 from Corynebacterium efficiens (strain DSM 44549 / YS-314 / AJ 12310 / JCM 11189 / NBRC 100395).